Here is a 125-residue protein sequence, read N- to C-terminus: Small ribosomal subunit protein uS12 (125 aa).

The disordered stretch occupies residues M1–A23. Residue D89 is modified to 3-methylthioaspartic acid. The disordered stretch occupies residues A102–K125. Basic residues predominate over residues R111 to K125.

It belongs to the universal ribosomal protein uS12 family. In terms of assembly, part of the 30S ribosomal subunit. Contacts proteins S8 and S17. May interact with IF1 in the 30S initiation complex.

Functionally, with S4 and S5 plays an important role in translational accuracy. Its function is as follows. Interacts with and stabilizes bases of the 16S rRNA that are involved in tRNA selection in the A site and with the mRNA backbone. Located at the interface of the 30S and 50S subunits, it traverses the body of the 30S subunit contacting proteins on the other side and probably holding the rRNA structure together. The combined cluster of proteins S8, S12 and S17 appears to hold together the shoulder and platform of the 30S subunit. The polypeptide is Small ribosomal subunit protein uS12 (Halorhodospira halophila (strain DSM 244 / SL1) (Ectothiorhodospira halophila (strain DSM 244 / SL1))).